The primary structure comprises 597 residues: Medium/long-chain-fatty-acid--CoA ligase FadD6 (597 aa).

Belongs to the ATP-dependent AMP-binding enzyme family.

It catalyses the reaction a medium-chain fatty acid + ATP + CoA = a medium-chain fatty acyl-CoA + AMP + diphosphate. The catalysed reaction is a long-chain fatty acid + ATP + CoA = a long-chain fatty acyl-CoA + AMP + diphosphate. The enzyme catalyses hexanoate + ATP + CoA = hexanoyl-CoA + AMP + diphosphate. It carries out the reaction octanoate + ATP + CoA = octanoyl-CoA + AMP + diphosphate. It catalyses the reaction decanoate + ATP + CoA = decanoyl-CoA + AMP + diphosphate. The catalysed reaction is dodecanoate + ATP + CoA = dodecanoyl-CoA + AMP + diphosphate. The enzyme catalyses tetradecanoate + ATP + CoA = tetradecanoyl-CoA + AMP + diphosphate. It carries out the reaction hexadecanoate + ATP + CoA = hexadecanoyl-CoA + AMP + diphosphate. It catalyses the reaction octadecanoate + ATP + CoA = octadecanoyl-CoA + AMP + diphosphate. The catalysed reaction is 9-decenoate + ATP + CoA = 9-decenoyl-CoA + AMP + diphosphate. The enzyme catalyses (9Z)-octadecenoate + ATP + CoA = (9Z)-octadecenoyl-CoA + AMP + diphosphate. It carries out the reaction 2-hydroxyhexadecanoate + ATP + CoA = 2-hydroxyhexadecanoyl-CoA + AMP + diphosphate. It catalyses the reaction 3-hydroxytetradecanoate + ATP + CoA = 3-hydroxytetradecanoyl-CoA + AMP + diphosphate. The catalysed reaction is 12-hydroxyoctadecanoate + ATP + CoA = 12-hydroxyoctadecanoyl-CoA + AMP + diphosphate. The enzyme catalyses 15-hydroxypentadecanoate + ATP + CoA = 15-hydroxypentadecanoyl-CoA + AMP + diphosphate. It carries out the reaction 16-hydroxyhexadecanoate + ATP + CoA = 16-hydroxyhexadecanoyl-CoA + AMP + diphosphate. It catalyses the reaction 2-methylhexadecanoate + ATP + CoA = 2-methylhexadecanoyl-CoA + AMP + diphosphate. The catalysed reaction is 3-methylundecanoate + ATP + CoA = 3-methylundecanoyl-CoA + AMP + diphosphate. The enzyme catalyses 12-methyltridecanoate + ATP + CoA = 12-methyltridecanoyl-CoA + AMP + diphosphate. It carries out the reaction 12-methyloctadecanoate + ATP + CoA = 12-methyloctadecanoyl-CoA + AMP + diphosphate. Its function is as follows. Catalyzes the activation of medium/long-chain fatty acids as acyl-coenzyme A (acyl-CoA). May play a role in the uptake of fatty acids by trapping them metabolically as CoA esters. May also play an important role in the channeling of fatty acids into triacylglycerol (TAG) for use by Mycobacterium during its dormancy. The protein is Medium/long-chain-fatty-acid--CoA ligase FadD6 of Mycobacterium tuberculosis (strain ATCC 25618 / H37Rv).